The primary structure comprises 859 residues: Homeobox-leucine zipper protein HOX32 (859 aa).

A disordered region spans residues 7 to 31 (AAVHGVGRQDRSSPGGGGAPQVDTG). The segment at residues 29–92 (DTGKYVRYTP…NRRCREKQRK (64 aa)) is a DNA-binding region (homeobox). A coiled-coil region spans residues 100 to 129 (VNRKLTAMNKLLMEENDRLQKQVSRLVYEN). Residues 146-164 (TSCESVVTSGQHHQQQNPA) show a composition bias toward polar residues. Positions 146 to 172 (TSCESVVTSGQHHQQQNPAATRPQRDA) are disordered. In terms of domain architecture, START spans 171–393 (DANNPAGLLA…LRHIRQIAHE (223 aa)).

Belongs to the HD-ZIP homeobox family. Class III subfamily. As to expression, expressed in seedlings, roots, stems, leaf sheaths and blades and panicles.

Its subcellular location is the nucleus. In terms of biological role, probable transcription factor. The protein is Homeobox-leucine zipper protein HOX32 (HOX32) of Oryza sativa subsp. indica (Rice).